The sequence spans 203 residues: Putative 3-methyladenine DNA glycosylase (203 aa).

Belongs to the DNA glycosylase MPG family.

The polypeptide is Putative 3-methyladenine DNA glycosylase (Staphylococcus saprophyticus subsp. saprophyticus (strain ATCC 15305 / DSM 20229 / NCIMB 8711 / NCTC 7292 / S-41)).